Here is a 257-residue protein sequence, read N- to C-terminus: Methylthioribulose-1-phosphate dehydratase (257 aa).

The segment at 1–33 is disordered; it reads MVSSQEKMASISDIIQKDEDSGSEKTESQDKEH. Residues 15–33 show a composition bias toward basic and acidic residues; sequence IQKDEDSGSEKTESQDKEH. Substrate is bound at residue Cys107. 2 residues coordinate Zn(2+): His125 and His127. Residue Glu149 is the Proton donor/acceptor of the active site. His205 lines the Zn(2+) pocket.

Belongs to the aldolase class II family. MtnB subfamily. Requires Zn(2+) as cofactor.

The protein resides in the cytoplasm. It catalyses the reaction 5-(methylsulfanyl)-D-ribulose 1-phosphate = 5-methylsulfanyl-2,3-dioxopentyl phosphate + H2O. Its pathway is amino-acid biosynthesis; L-methionine biosynthesis via salvage pathway; L-methionine from S-methyl-5-thio-alpha-D-ribose 1-phosphate: step 2/6. Catalyzes the dehydration of methylthioribulose-1-phosphate (MTRu-1-P) into 2,3-diketo-5-methylthiopentyl-1-phosphate (DK-MTP-1-P). Functions in the methionine salvage pathway. May play a role in apoptosis. The polypeptide is Methylthioribulose-1-phosphate dehydratase (Esox lucius (Northern pike)).